A 35-amino-acid polypeptide reads, in one-letter code: Potassium channel toxin alpha-KTx 23.2 (35 aa).

3 cysteine pairs are disulfide-bonded: Cys6/Cys26, Cys12/Cys31, and Cys16/Cys33.

It belongs to the short scorpion toxin superfamily. Potassium channel inhibitor family. Alpha-KTx 23 subfamily. Expressed by the venom gland.

The protein localises to the secreted. Its function is as follows. Selectively and irreversibly binds (K(d)=2.9 pM) and blocks Kv1.3/KCNA3 potassium channels of human T-lymphocytes. Weakly blocks Kv1.2/KCNA2 (9%). In Vaejovis mexicanus smithi (Mexican scorpion), this protein is Potassium channel toxin alpha-KTx 23.2.